A 276-amino-acid chain; its full sequence is Shikimate dehydrogenase (NADP(+)) (276 aa).

Shikimate is bound by residues 15-17 (SLS) and Thr62. The Proton acceptor role is filled by Lys66. Glu78 contacts NADP(+). Positions 87 and 102 each coordinate shikimate. NADP(+) is bound by residues 151-156 (NRTVEK) and Ile218. Shikimate is bound at residue Tyr220. Gly241 contributes to the NADP(+) binding site.

It belongs to the shikimate dehydrogenase family. As to quaternary structure, homodimer.

It catalyses the reaction shikimate + NADP(+) = 3-dehydroshikimate + NADPH + H(+). The protein operates within metabolic intermediate biosynthesis; chorismate biosynthesis; chorismate from D-erythrose 4-phosphate and phosphoenolpyruvate: step 4/7. Involved in the biosynthesis of the chorismate, which leads to the biosynthesis of aromatic amino acids. Catalyzes the reversible NADPH linked reduction of 3-dehydroshikimate (DHSA) to yield shikimate (SA). The sequence is that of Shikimate dehydrogenase (NADP(+)) from Geobacillus kaustophilus (strain HTA426).